Here is a 4910-residue protein sequence, read N- to C-terminus: Midasin (4910 aa).

AAA-ATPase protomer regions lie at residues 305 to 528 (IQNS…DILF) and 636 to 975 (MEQI…TDII). ATP-binding positions include 315–322 (GKAGSGKT) and 653–660 (GETGTGKT). Positions 695-803 (VNSKTVAVPI…KKFEAQSSSI (109 aa)) are interaction with RIX1. The residue at position 1026 (Thr-1026) is a Phosphothreonine. AAA-ATPase protomer regions lie at residues 1054 to 1280 (HYII…WALR), 1345 to 1624 (KGMR…VEFI), 1732 to 1985 (RVVR…QLLI), and 2036 to 2286 (VYES…DELH). Residues 1083–1090 (GPTSSGKT), 1368–1375 (GETGCGKT), 1747–1754 (GSPGVGKT), and 2054–2061 (GPSNSGKT) contribute to the ATP site. Residues 2372–4075 (EVGKWANNVL…DGEGAQNNNK (1704 aa)) form a linker region. The residue at position 2971 (Ser-2971) is a Phosphoserine. 3 disordered regions span residues 4045-4547 (SPQP…EKMD), 4555-4574 (SDID…SGFI), and 4579-4600 (SEED…EDDS). Residues 4078-4088 (EQDEDLTEDAQ) are compositionally biased toward acidic residues. Basic and acidic residues predominate over residues 4089–4098 (NENKEQQDKD). The segment covering 4099 to 4154 (ERDDENEDDAVEMEGDMAGELEDLSNGEENDDEDTDSEEEELDEEIDDLNEDDPNA) has biased composition (acidic residues). Positions 4155-4174 (IDDKMWDDKASDNSKEKDTD) are enriched in basic and acidic residues. Composition is skewed to acidic residues over residues 4202–4244 (GDED…EDLE), 4251–4274 (ETLD…DVDM), and 4288–4358 (GNED…EEEL). The residue at position 4353 (Ser-4353) is a Phosphoserine. Residues 4359-4372 (KQDAAMEENKEKGG) are compositionally biased toward basic and acidic residues. Thr-4388 carries the phosphothreonine modification. 2 stretches are compositionally biased toward basic and acidic residues: residues 4435–4447 (DVTK…REEA) and 4481–4495 (LEKN…EHVE). Residues 4498–4516 (NTETDTQALGSATQDQLQT) are compositionally biased toward polar residues. Residues 4517 to 4531 (IDEDMAIDDDREEQE) show a composition bias toward acidic residues. Ser-4555 carries the phosphoserine modification. The segment covering 4557-4570 (IDAHDANNDVDSKK) has biased composition (basic and acidic residues). In terms of domain architecture, VWFA spans 4704–4899 (QIMIALDDSK…SELPEMLSLI (196 aa)).

The protein belongs to the midasin family. As to quaternary structure, associates with pre-60S ribosomes in the nucleoplasm. Interacts (via its hexameric AAA ATPase ring) with the RIX1 complex (via RIX1); this interaction is crucial for recruitment of MDN1 to the pre-ribosomal particle. Interacts (via VWFA/MIDAS domain) with YTM1 (via UBL domain). Interacts (via VWFA/MIDAS domain) with RSA4 (via UBL domain).

It is found in the nucleus. It localises to the nucleolus. The protein localises to the nucleoplasm. In terms of biological role, nuclear chaperone required for maturation and nuclear export of pre-60S ribosome subunits. Functions at successive maturation steps to remove ribosomal factors at critical transition points, first driving the exit of early pre-60S particles from the nucleolus and then driving late pre-60S particles from the nucleus. At an early stage in 60S maturation, mediates the dissociation of the NOP7 complex (YTM1-ERB1-NOP7) from early pre-60S particles, rendering them competent for export from the nucleolus to the nucleoplasm. Subsequently recruited to the nucleoplasmic particles through interaction with the RIX1 complex. This binding is only possible if the 5S RNP at the central protuberance has undergone the rotation to complete its maturation. After remodeling, removes the ribosome biogenesis factor RSA4 in an ATP hydrolysis-driven step from pre-60S ribosomal subunits, rendering them competent for export from the nucleoplasm to the cytoplasm. Activates the GTPase activity of NOG2, which disengages from the pre-60S particle upon GTP hydrolysis, thus freeing its binding site for the nuclear export factor NMD3. The polypeptide is Midasin (MDN1) (Saccharomyces cerevisiae (strain ATCC 204508 / S288c) (Baker's yeast)).